The primary structure comprises 244 residues: 23S rRNA (guanosine-2'-O-)-methyltransferase RlmB (244 aa).

S-adenosyl-L-methionine is bound by residues Gly196, Ile216, and Leu225.

The protein belongs to the class IV-like SAM-binding methyltransferase superfamily. RNA methyltransferase TrmH family. RlmB subfamily. In terms of assembly, homodimer.

Its subcellular location is the cytoplasm. It carries out the reaction guanosine(2251) in 23S rRNA + S-adenosyl-L-methionine = 2'-O-methylguanosine(2251) in 23S rRNA + S-adenosyl-L-homocysteine + H(+). Specifically methylates the ribose of guanosine 2251 in 23S rRNA. This Pectobacterium atrosepticum (strain SCRI 1043 / ATCC BAA-672) (Erwinia carotovora subsp. atroseptica) protein is 23S rRNA (guanosine-2'-O-)-methyltransferase RlmB.